The primary structure comprises 221 residues: Ribosomal RNA large subunit methyltransferase E (221 aa).

S-adenosyl-L-methionine-binding residues include Gly-60, Trp-62, Asp-89, Asp-105, and Asp-134. Lys-174 functions as the Proton acceptor in the catalytic mechanism. Residues Lys-199–Gly-221 form a disordered region.

This sequence belongs to the class I-like SAM-binding methyltransferase superfamily. RNA methyltransferase RlmE family.

The protein resides in the cytoplasm. It carries out the reaction uridine(2552) in 23S rRNA + S-adenosyl-L-methionine = 2'-O-methyluridine(2552) in 23S rRNA + S-adenosyl-L-homocysteine + H(+). In terms of biological role, specifically methylates the uridine in position 2552 of 23S rRNA at the 2'-O position of the ribose in the fully assembled 50S ribosomal subunit. The chain is Ribosomal RNA large subunit methyltransferase E from Ralstonia nicotianae (strain ATCC BAA-1114 / GMI1000) (Ralstonia solanacearum).